The primary structure comprises 30 residues: Thylakoid lumenal 13.3 kDa protein (30 aa).

The protein localises to the plastid. It localises to the chloroplast thylakoid lumen. The protein is Thylakoid lumenal 13.3 kDa protein of Spinacia oleracea (Spinach).